The sequence spans 256 residues: Imidazole glycerol phosphate synthase subunit HisF (256 aa).

Catalysis depends on residues Asp-12 and Asp-131.

This sequence belongs to the HisA/HisF family. As to quaternary structure, heterodimer of HisH and HisF.

It localises to the cytoplasm. It catalyses the reaction 5-[(5-phospho-1-deoxy-D-ribulos-1-ylimino)methylamino]-1-(5-phospho-beta-D-ribosyl)imidazole-4-carboxamide + L-glutamine = D-erythro-1-(imidazol-4-yl)glycerol 3-phosphate + 5-amino-1-(5-phospho-beta-D-ribosyl)imidazole-4-carboxamide + L-glutamate + H(+). Its pathway is amino-acid biosynthesis; L-histidine biosynthesis; L-histidine from 5-phospho-alpha-D-ribose 1-diphosphate: step 5/9. In terms of biological role, IGPS catalyzes the conversion of PRFAR and glutamine to IGP, AICAR and glutamate. The HisF subunit catalyzes the cyclization activity that produces IGP and AICAR from PRFAR using the ammonia provided by the HisH subunit. The sequence is that of Imidazole glycerol phosphate synthase subunit HisF from Pseudomonas putida (strain ATCC 700007 / DSM 6899 / JCM 31910 / BCRC 17059 / LMG 24140 / F1).